The sequence spans 481 residues: UDP-N-acetylmuramoyl-L-alanyl-D-glutamate--L-lysine ligase (481 aa).

S42 is a UDP-N-acetyl-alpha-D-muramoyl-L-alanyl-D-glutamate binding site. G118–T124 contributes to the ATP binding site. Residues T160–T161, S187, and R195 contribute to the UDP-N-acetyl-alpha-D-muramoyl-L-alanyl-D-glutamate site. N6-carboxylysine is present on K229. An L-lysine recognition motif motif is present at residues D404–N407.

This sequence belongs to the MurCDEF family. MurE subfamily. Post-translationally, carboxylation is probably crucial for Mg(2+) binding and, consequently, for the gamma-phosphate positioning of ATP.

The protein resides in the cytoplasm. It catalyses the reaction UDP-N-acetyl-alpha-D-muramoyl-L-alanyl-D-glutamate + L-lysine + ATP = UDP-N-acetyl-alpha-D-muramoyl-L-alanyl-gamma-D-glutamyl-L-lysine + ADP + phosphate + H(+). It functions in the pathway cell wall biogenesis; peptidoglycan biosynthesis. Its function is as follows. Catalyzes the addition of L-lysine to the nucleotide precursor UDP-N-acetylmuramoyl-L-alanyl-D-glutamate (UMAG) in the biosynthesis of bacterial cell-wall peptidoglycan. The protein is UDP-N-acetylmuramoyl-L-alanyl-D-glutamate--L-lysine ligase of Streptococcus sanguinis (strain SK36).